Reading from the N-terminus, the 331-residue chain is DNA-directed RNA polymerase subunit alpha (331 aa).

Residues 1–232 (MQGTFRDFLK…DQLSVFVDLE (232 aa)) are alpha N-terminal domain (alpha-NTD). Residues 247 to 331 (VDPILLRPID…AGLGEDRVVG (85 aa)) are alpha C-terminal domain (alpha-CTD).

This sequence belongs to the RNA polymerase alpha chain family. As to quaternary structure, homodimer. The RNAP catalytic core consists of 2 alpha, 1 beta, 1 beta' and 1 omega subunit. When a sigma factor is associated with the core the holoenzyme is formed, which can initiate transcription.

It carries out the reaction RNA(n) + a ribonucleoside 5'-triphosphate = RNA(n+1) + diphosphate. Its function is as follows. DNA-dependent RNA polymerase catalyzes the transcription of DNA into RNA using the four ribonucleoside triphosphates as substrates. This is DNA-directed RNA polymerase subunit alpha from Alkalilimnicola ehrlichii (strain ATCC BAA-1101 / DSM 17681 / MLHE-1).